The primary structure comprises 272 residues: Aquaporin FA-CHIP (272 aa).

At 1 to 17 the chain is on the cytoplasmic side; sequence MASEFKKKAFWRAVIAE. The chain crosses the membrane as a helical span at residues 18–35; the sequence is FLAMILFVFISIGAALGF. The Extracellular portion of the chain corresponds to 36 to 52; the sequence is NFPIEEKANQTVGRSQD. Asparagine 44 carries an N-linked (GlcNAc...) asparagine glycan. Residues 53–71 form a helical membrane-spanning segment; that stretch reads IVKVSLAFGISIATMAQSV. At 72–97 the chain is on the cytoplasmic side; the sequence is GHVSGAHLNPAVTLGCLLSCQISILK. Positions 80-82 match the NPA 1 motif; it reads NPA. Residues 98 to 119 form a helical membrane-spanning segment; the sequence is AVMYIIAQCLGAVVATAILSGI. At 120-139 the chain is on the extracellular side; that stretch reads TSGLENNSLGLNGLSPGVSA. N-linked (GlcNAc...) asparagine glycosylation occurs at asparagine 125. Residues 140-160 traverse the membrane as a helical segment; the sequence is GQGLGVEILVTFQLVLCVVAV. The Cytoplasmic segment spans residues 161–168; that stretch reads TDRRRHDV. Residues 169–188 form a helical membrane-spanning segment; the sequence is SGSVPLAIGLSVALGHLIAI. At 189-214 the chain is on the extracellular side; it reads DYTGCGMNPARSFGSAVLTKNFTYHW. The short motif at 196–198 is the NPA 2 element; that stretch reads NPA. Asparagine 209 carries N-linked (GlcNAc...) asparagine glycosylation. A helical transmembrane segment spans residues 215–236; sequence IFWVGPMIGGAAAAIIYDFILA. The Cytoplasmic portion of the chain corresponds to 237-272; the sequence is PRTSDLTDRMKVWTNGQVEEYELDGDDNTRVEMKPK.

It belongs to the MIP/aquaporin (TC 1.A.8) family.

It is found in the membrane. Forms a water-specific channel. In Pelophylax lessonae (Pool frog), this protein is Aquaporin FA-CHIP (AQPA).